Reading from the N-terminus, the 312-residue chain is Ribosomal RNA small subunit methyltransferase H (312 aa).

S-adenosyl-L-methionine contacts are provided by residues 35–37 (GGH), D55, F85, D101, and Q108.

The protein belongs to the methyltransferase superfamily. RsmH family.

Its subcellular location is the cytoplasm. The catalysed reaction is cytidine(1402) in 16S rRNA + S-adenosyl-L-methionine = N(4)-methylcytidine(1402) in 16S rRNA + S-adenosyl-L-homocysteine + H(+). Functionally, specifically methylates the N4 position of cytidine in position 1402 (C1402) of 16S rRNA. The polypeptide is Ribosomal RNA small subunit methyltransferase H (Buchnera aphidicola subsp. Acyrthosiphon pisum (strain Tuc7)).